The chain runs to 101 residues: NAD(P)H-quinone oxidoreductase subunit 4L, chloroplastic (101 aa).

The next 3 membrane-spanning stretches (helical) occupy residues 2–22 (MFEH…YGLI), 32–52 (MCLE…SDLF), and 61–81 (IFSI…LAIV).

Belongs to the complex I subunit 4L family. In terms of assembly, NDH is composed of at least 16 different subunits, 5 of which are encoded in the nucleus.

It localises to the plastid. The protein resides in the chloroplast thylakoid membrane. It catalyses the reaction a plastoquinone + NADH + (n+1) H(+)(in) = a plastoquinol + NAD(+) + n H(+)(out). The catalysed reaction is a plastoquinone + NADPH + (n+1) H(+)(in) = a plastoquinol + NADP(+) + n H(+)(out). In terms of biological role, NDH shuttles electrons from NAD(P)H:plastoquinone, via FMN and iron-sulfur (Fe-S) centers, to quinones in the photosynthetic chain and possibly in a chloroplast respiratory chain. The immediate electron acceptor for the enzyme in this species is believed to be plastoquinone. Couples the redox reaction to proton translocation, and thus conserves the redox energy in a proton gradient. This is NAD(P)H-quinone oxidoreductase subunit 4L, chloroplastic from Lemna minor (Common duckweed).